Consider the following 386-residue polypeptide: MQMADLEKKLENSVLPPLLKRELSEKILREEISEEYLVDEIISETTRAYERTLVEPGEAVGVVAAQSIGEPGTQMTMRTFHYAGVAELNVTLGLPRMIEIVDARKEPSTPTMTIYLNDEFKGNREKAATVAKNIESTNVESVSEDISVDLVNECITIILNNQQLESRGLTVPDVIDAIKSKMKLKIEDHENVLNLKIKTPSLKALRKRLPKVRAIHLKGVQNIKRVIIRKEVDEYILYSEGSNIKEVFDIEGVDTTKTTTNNIVEIQDVLGIEAARNAIIYEMDATLGNQGLTVDKRHLMMVADLMCTDGVVKPIGRHGIGGEKASVLARAAFEETVKHLYSASMRGYVDELGGVVENIIVGKPISMGTGCIDICIDKSYEEGKEL.

It belongs to the RNA polymerase beta' chain family. As to quaternary structure, part of the RNA polymerase complex.

The protein localises to the cytoplasm. The enzyme catalyses RNA(n) + a ribonucleoside 5'-triphosphate = RNA(n+1) + diphosphate. Its function is as follows. DNA-dependent RNA polymerase (RNAP) catalyzes the transcription of DNA into RNA using the four ribonucleoside triphosphates as substrates. Forms part of the jaw domain. This chain is DNA-directed RNA polymerase subunit Rpo1C, found in Methanococcus maripaludis (strain DSM 14266 / JCM 13030 / NBRC 101832 / S2 / LL).